We begin with the raw amino-acid sequence, 779 residues long: Chloride channel protein CLC-c (779 aa).

Serine 27 bears the Phosphoserine mark. The next 12 helical transmembrane spans lie at 92–112, 142–162, 190–210, 215–235, 257–277, 287–307, 341–361, 380–400, 466–486, 488–508, 520–540, and 541–561; these read TFLK…VGFL, FAFA…CAFI, STLF…FVVG, MVHT…KKYR, GAAA…LFAL, ALLW…RSLI, LAIV…NYLV, IMLV…LPWL, LAIF…IAIP, GLFI…GRLL, SLLG…SLCV, and ILLE…VLLI. The region spanning 601 to 659 is the CBS 1 domain; the sequence is DVVSGALISFSRVEKVGVIWQALKMTRHNGFPVIDEPPFTEASELCGIALRSHLLVLLQ. Position 672 is a phosphoserine (serine 672). The 65-residue stretch at 713–777 folds into the CBS 2 domain; sequence ITNTSPYTVL…VLGLYPHIDP (65 aa). Residues 741–761 traverse the membrane as a helical segment; it reads HLCVVPKTPGRPPIVGILTRH.

Belongs to the chloride channel (TC 2.A.49) family. As to quaternary structure, homodimer. Interacts with PP2A5. In terms of tissue distribution, broadly expressed in the plant.

It is found in the membrane. Functionally, voltage-gated chloride channel. This is Chloride channel protein CLC-c (CLC-C) from Arabidopsis thaliana (Mouse-ear cress).